The following is a 194-amino-acid chain: Protein A43 (194 aa).

The signal sequence occupies residues methionine 1–serine 22. The Extracellular segment spans residues serine 23–aspartate 165. N-linked (GlcNAc...) asparagine; by host glycans are attached at residues asparagine 65 and asparagine 114. A helical transmembrane segment spans residues isoleucine 166 to valine 186. At phenylalanine 187–serine 194 the chain is on the cytoplasmic side.

This sequence belongs to the orthopoxvirus OPG172 protein family.

It localises to the host membrane. The protein resides in the host cell surface. This chain is Protein A43 (OPG172), found in Homo sapiens (Human).